Consider the following 601-residue polypeptide: Elongation factor 4 (601 aa).

The tr-type G domain maps to 2–184 (DLIRNFSIIA…EMIARVPPPT (183 aa)). GTP contacts are provided by residues 14–19 (DHGKST) and 131–134 (NKID).

Belongs to the TRAFAC class translation factor GTPase superfamily. Classic translation factor GTPase family. LepA subfamily.

It is found in the cell inner membrane. It catalyses the reaction GTP + H2O = GDP + phosphate + H(+). In terms of biological role, required for accurate and efficient protein synthesis under certain stress conditions. May act as a fidelity factor of the translation reaction, by catalyzing a one-codon backward translocation of tRNAs on improperly translocated ribosomes. Back-translocation proceeds from a post-translocation (POST) complex to a pre-translocation (PRE) complex, thus giving elongation factor G a second chance to translocate the tRNAs correctly. Binds to ribosomes in a GTP-dependent manner. In Polynucleobacter asymbioticus (strain DSM 18221 / CIP 109841 / QLW-P1DMWA-1) (Polynucleobacter necessarius subsp. asymbioticus), this protein is Elongation factor 4.